A 523-amino-acid chain; its full sequence is Cytochrome P450 52-N1 (523 aa).

A helical transmembrane segment spans residues 5 to 25 (AVLGAFAAFLLYMDVLYPFVI). Cysteine 469 contributes to the heme binding site.

This sequence belongs to the cytochrome P450 family. The cofactor is heme.

It is found in the membrane. The enzyme catalyses an omega-methyl-long-chain fatty acid + reduced [NADPH--hemoprotein reductase] + O2 = an omega-hydroxy-long-chain fatty acid + oxidized [NADPH--hemoprotein reductase] + H2O + H(+). It carries out the reaction (9Z,12Z)-octadecadienoate + reduced [NADPH--hemoprotein reductase] + O2 = 18-hydroxy-(9Z,12Z)-octadecadienoate + oxidized [NADPH--hemoprotein reductase] + H2O + H(+). The catalysed reaction is (9Z)-octadecenoate + reduced [NADPH--hemoprotein reductase] + O2 = 18-hydroxy-(9Z)-octadecenoate + oxidized [NADPH--hemoprotein reductase] + H2O + H(+). It catalyses the reaction hexadecanoate + reduced [NADPH--hemoprotein reductase] + O2 = 16-hydroxyhexadecanoate + oxidized [NADPH--hemoprotein reductase] + H2O + H(+). The enzyme catalyses (9Z)-hexadecenoate + reduced [NADPH--hemoprotein reductase] + O2 = (9Z)-16-hydroxyhexadec-9-enoate + oxidized [NADPH--hemoprotein reductase] + H2O + H(+). It carries out the reaction octadecanoate + reduced [NADPH--hemoprotein reductase] + O2 = 18-hydroxyoctadecanoate + oxidized [NADPH--hemoprotein reductase] + H2O + H(+). Its function is as follows. Catalyzes the terminal (at the omega-position) hydroxylation of a fatty acid. Probably involved in alkane metabolism. Linoleic acid is the preferred substrate, but it acts on various other C-16, C-18 and C-20 saturated and unsaturated fatty acids, namely palmitic, palmitoleic, stearic, oleic, alpha-linoleic, arachidonic and myristic acid. This chain is Cytochrome P450 52-N1, found in Starmerella bombicola (Yeast).